We begin with the raw amino-acid sequence, 373 residues long: Phosphoserine aminotransferase (373 aa).

R47 lines the L-glutamate pocket. Pyridoxal 5'-phosphate is bound by residues 81-82 (AR), W113, T164, D185, and Q208. N6-(pyridoxal phosphate)lysine is present on K209. Pyridoxal 5'-phosphate is bound at residue 250 to 251 (NT).

This sequence belongs to the class-V pyridoxal-phosphate-dependent aminotransferase family. SerC subfamily. Homodimer. Pyridoxal 5'-phosphate is required as a cofactor.

The protein resides in the cytoplasm. The catalysed reaction is O-phospho-L-serine + 2-oxoglutarate = 3-phosphooxypyruvate + L-glutamate. The enzyme catalyses 4-(phosphooxy)-L-threonine + 2-oxoglutarate = (R)-3-hydroxy-2-oxo-4-phosphooxybutanoate + L-glutamate. Its pathway is amino-acid biosynthesis; L-serine biosynthesis; L-serine from 3-phospho-D-glycerate: step 2/3. The protein operates within cofactor biosynthesis; pyridoxine 5'-phosphate biosynthesis; pyridoxine 5'-phosphate from D-erythrose 4-phosphate: step 3/5. Catalyzes the reversible conversion of 3-phosphohydroxypyruvate to phosphoserine and of 3-hydroxy-2-oxo-4-phosphonooxybutanoate to phosphohydroxythreonine. This is Phosphoserine aminotransferase from Buchnera aphidicola subsp. Baizongia pistaciae (strain Bp).